Here is a 110-residue protein sequence, read N- to C-terminus: Insulin (110 aa).

The first 24 residues, 1-24 (MALWTRLLPLLALLALLGPDPAQA), serve as a signal peptide directing secretion. Intrachain disulfides connect C31-C96, C43-C109, and C95-C100. Positions 57–87 (EVEEQQGGQVELGGGPGAGLPQPLALEMALQ) are cleaved as a propeptide — c peptide.

It belongs to the insulin family. Heterodimer of a B chain and an A chain linked by two disulfide bonds.

It is found in the secreted. In terms of biological role, insulin decreases blood glucose concentration. It increases cell permeability to monosaccharides, amino acids and fatty acids. It accelerates glycolysis, the pentose phosphate cycle, and glycogen synthesis in liver. The sequence is that of Insulin (INS) from Ictidomys tridecemlineatus (Thirteen-lined ground squirrel).